The primary structure comprises 190 residues: Small ribosomal subunit protein uS4 (190 aa).

The S4 RNA-binding domain maps to 106-178; the sequence is RRLQTVVFKH…GRVKRVKRNA (73 aa). Residues 166–190 are disordered; that stretch reads GRPGRVKRVKRNAAKKGSGGGDDDE. A compositionally biased stretch (basic residues) spans 169–179; the sequence is GRVKRVKRNAA.

Belongs to the universal ribosomal protein uS4 family.

This Trypanosoma brucei brucei protein is Small ribosomal subunit protein uS4.